The chain runs to 899 residues: Solute carrier family 12 member 9 (899 aa).

Residues 1 to 44 (MTSESSPLLHYRLFSVSDGGLGPPDSSPIMTDAVTVGTGPTQRK) lie on the Cytoplasmic side of the membrane. The helical transmembrane segment at 45-65 (LSTFFGVVVPTVLSMFSIVVF) threads the bilayer. Residues 66 to 80 (MRIGFVVGHAGLLQS) are Extracellular-facing. The chain crosses the membrane as a helical span at residues 81-101 (LLMLFVAYVIIWLTVLSVCAI). At 102 to 127 (STNGAVQGGGAYFMISRTLGPEFGGS) the chain is on the cytoplasmic side. The chain crosses the membrane as a helical span at residues 128 to 148 (IGLMFYLANVFACGVYVLGLV). Over 149–176 (EAVLDVFGRDPSDVTDSLRSLPQGYGYS) the chain is Extracellular. The helical transmembrane segment at 177-197 (FLYASIILLLCMAICLVGASI) threads the bilayer. Over 198-202 (YSQAS) the chain is Cytoplasmic. The helical transmembrane segment at 203-223 (FFIFLLVFVVLLTILISFLAV) threads the bilayer. Residues 224 to 266 (RPLTVSIRHGGNVTMTGVYTGINSSTLHNNLQADYSLDYTTGN) lie on the Extracellular side of the membrane. Residues N235 and N246 are each glycosylated (N-linked (GlcNAc...) asparagine). The helical transmembrane segment at 267-287 (LMNFATVFAVMFNGCTGIMAG) threads the bilayer. At 288–304 (CNLSGELKQPSRSIPMG) the chain is on the cytoplasmic side. Residues 305–325 (TIIAVIITFFVYLILFIFTAF) form a helical membrane-spanning segment. Over 326–347 (TCDRTLLREDYGFFRSINIWPP) the chain is Extracellular. A helical membrane pass occupies residues 348–368 (FVLIGVYATSLSASMSTLIGA). Residues 369-393 (SRILHALAKDDLFGVLLAPAKLVSK) lie on the Cytoplasmic side of the membrane. Residues 394–414 (GGNPWGAVVYTWALVQLVLLA) form a helical membrane-spanning segment. Residues 415-419 (GKLNT) are Extracellular-facing. The chain crosses the membrane as a helical span at residues 420–440 (IAGIVTVFYLIAYAAIDLACL). Over 441–469 (ALEWASAPNFRPTFRFFSWHTCLLGILSS) the chain is Cytoplasmic. A helical membrane pass occupies residues 470 to 490 (LVMMFLINPAYASGSIVLLLL). Residues 491 to 739 (LLGSIHFRSS…PLDLLRPQAS (249 aa)) lie on the Extracellular side of the membrane. A helical membrane pass occupies residues 740 to 760 (AYVDVCSLFLLQMACILNMAA). At 761–899 (SWRRYQLRVF…GLTPVTCTEL (139 aa)) the chain is on the cytoplasmic side.

Belongs to the SLC12A transporter family.

It localises to the cell membrane. The protein resides in the lysosome membrane. In terms of biological role, seems to correspond to a subunit of a multimeric transport system and thus, additional subunits may be required for its function. May play a role in lysosomal ion flux and osmoregulation. This chain is Solute carrier family 12 member 9 (slc12a9), found in Xenopus laevis (African clawed frog).